We begin with the raw amino-acid sequence, 793 residues long: Kinesin-associated protein 3 (793 aa).

Residue serine 60 is modified to Phosphoserine. A compositionally biased stretch (basic and acidic residues) spans 103 to 119 (LPGKEKKEKSSKPKDPP). The segment at 103–123 (LPGKEKKEKSSKPKDPPPFEG) is disordered. 5 ARM repeats span residues 333–373 (FMEN…NLSF), 374–412 (DTGL…HISM), 494–533 (DGPT…NLTI), 578–620 (DDSC…QMVF), and 621–662 (HQAT…IIAE).

Interacts with SMC3 subunit of the cohesin complex. Heterotrimer of KIFAP3, KIF3A and KIF3B. Interacts with RAP1GDS1/SMG GDS. Post-translationally, phosphorylated on tyrosine residues by SRC in vitro; this reduces the binding affinity of the protein for RAP1GDS1.

Its function is as follows. Involved in tethering the chromosomes to the spindle pole and in chromosome movement. Binds to the tail domain of the KIF3A/KIF3B heterodimer to form a heterotrimeric KIF3 complex and may regulate the membrane binding of this complex. This Mus musculus (Mouse) protein is Kinesin-associated protein 3 (Kifap3).